A 102-amino-acid chain; its full sequence is Urease subunit beta (102 aa).

The protein belongs to the urease beta subunit family. In terms of assembly, heterotrimer of UreA (gamma), UreB (beta) and UreC (alpha) subunits. Three heterotrimers associate to form the active enzyme.

The protein localises to the cytoplasm. It carries out the reaction urea + 2 H2O + H(+) = hydrogencarbonate + 2 NH4(+). It participates in nitrogen metabolism; urea degradation; CO(2) and NH(3) from urea (urease route): step 1/1. This chain is Urease subunit beta, found in Bordetella pertussis (strain Tohama I / ATCC BAA-589 / NCTC 13251).